Reading from the N-terminus, the 419-residue chain is Queuine tRNA-ribosyltransferase accessory subunit 2 (419 aa).

Zn(2+) is bound by residues cysteine 326, cysteine 328, cysteine 331, and histidine 357.

It belongs to the queuine tRNA-ribosyltransferase family. QTRT2 subfamily. As to quaternary structure, heterodimer of a catalytic subunit and an accessory subunit. Zn(2+) serves as cofactor.

It localises to the cytoplasm. Non-catalytic subunit of the queuine tRNA-ribosyltransferase (TGT) that catalyzes the base-exchange of a guanine (G) residue with queuine (Q) at position 34 (anticodon wobble position) in tRNAs with GU(N) anticodons (tRNA-Asp, -Asn, -His and -Tyr), resulting in the hypermodified nucleoside queuosine (7-(((4,5-cis-dihydroxy-2-cyclopenten-1-yl)amino)methyl)-7-deazaguanosine). This chain is Queuine tRNA-ribosyltransferase accessory subunit 2, found in Drosophila grimshawi (Hawaiian fruit fly).